The chain runs to 562 residues: Protein KASH5 (562 aa).

Residues Met-1–Pro-521 lie on the Cytoplasmic side of the membrane. Residues Ala-125–Arg-153 form a disordered region. Residues Ser-164–Glu-349 adopt a coiled-coil conformation. Positions Glu-407 to Pro-481 are disordered. Positions Ala-431 to Glu-448 are enriched in basic and acidic residues. A helical; Anchor for type IV membrane protein membrane pass occupies residues Leu-522–Gly-542. Residues Leu-541–Val-562 form an interaction with SUN1 region. The Perinuclear space segment spans residues Pro-543 to Val-562.

In terms of assembly, core component the LINC complex which is composed of inner nuclear membrane SUN domain-containing proteins coupled to outer nuclear membrane KASH domain-containing nesprins. SUN and KASH domain-containing proteins seem to bind each other promiscuously; however, differentially expression of LINC complex constituents is giving rise to specific assemblies. At least SUN1/2-containing core LINC complexes are proposed to be hexameric composed of three protomers of each KASH and SUN domain-containing protein. Interacts with SUN1; this interaction mediates its telomere localization by forming a SUN1:KASH5 LINC complex. Component of a probable SUN2:KASH5 LINC complex. Self-associates. Interacts with DYNC1H1, DCTN1, DYNC1I1/2 and PAFAH1B1; suggesting the association with the dynein-dynactin motor complex. In terms of tissue distribution, expressed in testis (at protein level).

The protein resides in the nucleus outer membrane. Its subcellular location is the nucleus. It is found in the chromosome. The protein localises to the telomere. It localises to the nucleus envelope. Its function is as follows. As a component of the LINC (LInker of Nucleoskeleton and Cytoskeleton) complex, involved in the connection between the nuclear lamina and the cytoskeleton. The nucleocytoplasmic interactions established by the LINC complex play an important role in the transmission of mechanical forces across the nuclear envelope and in nuclear movement and positioning. Required for telomere attachment to nuclear envelope in the prophase of meiosis. Required for rapid telomere prophase movements implicating a SUN1/2:KASH5 LINC complex in which SUN1 and SUN2 seem to act at least partial redundantly. Required for homolog pairing during meiotic prophase in spermatocytes and probably oocytes. Essential for male and female gametogenesis. Recruits cytoplasmic dynein to telomere attachment sites at the nuclear envelope in spermatocytes. In oocytes is involved in meiotic resumption and spindle formation. The sequence is that of Protein KASH5 from Homo sapiens (Human).